The following is a 97-amino-acid chain: MKLRPLHDRVVIRRSEEETKTAGGIVLPGSAAEKPNRGEVVAVGTGRVLDNGEVRALAVKVGDKVVFGPYSGSNAIKVDGEELLVMGESEILAVLED.

This sequence belongs to the GroES chaperonin family. Heptamer of 7 subunits arranged in a ring. Interacts with the chaperonin GroEL.

The protein localises to the cytoplasm. In terms of biological role, together with the chaperonin GroEL, plays an essential role in assisting protein folding. The GroEL-GroES system forms a nano-cage that allows encapsulation of the non-native substrate proteins and provides a physical environment optimized to promote and accelerate protein folding. GroES binds to the apical surface of the GroEL ring, thereby capping the opening of the GroEL channel. The sequence is that of Co-chaperonin GroES from Pseudomonas aeruginosa (strain LESB58).